Reading from the N-terminus, the 586-residue chain is uncharacterized protein (586 aa).

Coiled coils occupy residues 183–293 (THTE…ELEN) and 331–400 (FKDK…DKKN).

This is an uncharacterized protein from Bacillus subtilis (strain 168).